The chain runs to 362 residues: tRNA-specific 2-thiouridylase MnmA 3 (362 aa).

ATP is bound by residues 11–18 (GMSGGIDS) and Met37. Cys91 acts as the Nucleophile in catalysis. A disulfide bridge links Cys91 with Cys188. Gly115 is an ATP binding site. The tract at residues 137-139 (KDQ) is interaction with tRNA. Cys188 acts as the Cysteine persulfide intermediate in catalysis. Residues 296–297 (RY) form an interaction with tRNA region.

Belongs to the MnmA/TRMU family.

The protein localises to the cytoplasm. It catalyses the reaction S-sulfanyl-L-cysteinyl-[protein] + uridine(34) in tRNA + AH2 + ATP = 2-thiouridine(34) in tRNA + L-cysteinyl-[protein] + A + AMP + diphosphate + H(+). Its function is as follows. Catalyzes the 2-thiolation of uridine at the wobble position (U34) of tRNA, leading to the formation of s(2)U34. This Bacteroides fragilis (strain ATCC 25285 / DSM 2151 / CCUG 4856 / JCM 11019 / LMG 10263 / NCTC 9343 / Onslow / VPI 2553 / EN-2) protein is tRNA-specific 2-thiouridylase MnmA 3.